The sequence spans 300 residues: Dihydroorotate dehydrogenase B (NAD(+)), catalytic subunit (300 aa).

FMN contacts are provided by residues S20 and 44–45 (KG). Substrate is bound by residues K44 and 68-72 (NAIGL). FMN is bound by residues N98 and N125. N125 lines the substrate pocket. Catalysis depends on C128, which acts as the Nucleophile. Residues K163 and I189 each contribute to the FMN site. Residue 190–191 (NT) participates in substrate binding. Residues G215, 241-242 (GG), and 263-264 (GT) contribute to the FMN site.

This sequence belongs to the dihydroorotate dehydrogenase family. Type 1 subfamily. In terms of assembly, heterotetramer of 2 PyrK and 2 PyrD type B subunits. It depends on FMN as a cofactor.

The protein localises to the cytoplasm. It carries out the reaction (S)-dihydroorotate + NAD(+) = orotate + NADH + H(+). The protein operates within pyrimidine metabolism; UMP biosynthesis via de novo pathway; orotate from (S)-dihydroorotate (NAD(+) route): step 1/1. Its function is as follows. Catalyzes the conversion of dihydroorotate to orotate with NAD(+) as electron acceptor. This is Dihydroorotate dehydrogenase B (NAD(+)), catalytic subunit (pyrD) from Lachnoclostridium phytofermentans (strain ATCC 700394 / DSM 18823 / ISDg) (Clostridium phytofermentans).